A 493-amino-acid polypeptide reads, in one-letter code: Cytoplasmic tRNA 2-thiolation protein 2 (493 aa).

The residue at position 489 (serine 489) is a Phosphoserine.

Belongs to the CTU2/NCS2 family. As to quaternary structure, interacts with NCS6 and URM1. May act by forming a heterodimer with NCS6.

Its subcellular location is the cytoplasm. Its pathway is tRNA modification; 5-methoxycarbonylmethyl-2-thiouridine-tRNA biosynthesis. In terms of biological role, plays a central role in 2-thiolation of mcm(5)S(2)U at tRNA wobble positions of tRNA(Lys), tRNA(Glu) and tRNA(Gln). May act by forming a heterodimer with NCS6 that ligates sulfur from thiocarboxylated URM1 onto the uridine of tRNAs at wobble position. Prior mcm(5) tRNA modification by the elongator complex is required for 2-thiolation. May also be involved in protein urmylation and in invasive and pseudohyphal growth. Inhibits replication of Brome mosaic virus. This Saccharomyces cerevisiae (strain ATCC 204508 / S288c) (Baker's yeast) protein is Cytoplasmic tRNA 2-thiolation protein 2.